We begin with the raw amino-acid sequence, 328 residues long: Ribosomal RNA small subunit methyltransferase H (328 aa).

Residues 64–66 (GGH), aspartate 83, phenylalanine 112, aspartate 129, and glutamine 136 contribute to the S-adenosyl-L-methionine site.

It belongs to the methyltransferase superfamily. RsmH family.

It is found in the cytoplasm. The catalysed reaction is cytidine(1402) in 16S rRNA + S-adenosyl-L-methionine = N(4)-methylcytidine(1402) in 16S rRNA + S-adenosyl-L-homocysteine + H(+). In terms of biological role, specifically methylates the N4 position of cytidine in position 1402 (C1402) of 16S rRNA. This is Ribosomal RNA small subunit methyltransferase H from Bdellovibrio bacteriovorus (strain ATCC 15356 / DSM 50701 / NCIMB 9529 / HD100).